A 556-amino-acid polypeptide reads, in one-letter code: DNA ligase B (556 aa).

Lys126 serves as the catalytic N6-AMP-lysine intermediate.

The protein belongs to the NAD-dependent DNA ligase family. LigB subfamily.

The catalysed reaction is NAD(+) + (deoxyribonucleotide)n-3'-hydroxyl + 5'-phospho-(deoxyribonucleotide)m = (deoxyribonucleotide)n+m + AMP + beta-nicotinamide D-nucleotide.. Functionally, catalyzes the formation of phosphodiester linkages between 5'-phosphoryl and 3'-hydroxyl groups in double-stranded DNA using NAD as a coenzyme and as the energy source for the reaction. This chain is DNA ligase B, found in Stutzerimonas stutzeri (strain A1501) (Pseudomonas stutzeri).